Here is a 103-residue protein sequence, read N- to C-terminus: Small ribosomal subunit protein uS10 (103 aa).

The protein belongs to the universal ribosomal protein uS10 family. As to quaternary structure, part of the 30S ribosomal subunit.

Its function is as follows. Involved in the binding of tRNA to the ribosomes. The polypeptide is Small ribosomal subunit protein uS10 (Clostridioides difficile (strain 630) (Peptoclostridium difficile)).